A 253-amino-acid polypeptide reads, in one-letter code: Indole-3-glycerol phosphate synthase (253 aa).

It belongs to the TrpC family.

The enzyme catalyses 1-(2-carboxyphenylamino)-1-deoxy-D-ribulose 5-phosphate + H(+) = (1S,2R)-1-C-(indol-3-yl)glycerol 3-phosphate + CO2 + H2O. It participates in amino-acid biosynthesis; L-tryptophan biosynthesis; L-tryptophan from chorismate: step 4/5. The protein is Indole-3-glycerol phosphate synthase of Bacillus cereus (strain G9842).